Reading from the N-terminus, the 198-residue chain is Altered inheritance of mitochondria protein 34, mitochondrial (198 aa).

A mitochondrion-targeting transit peptide spans 1–55 (MSISLFGRIVSQQFSGIRAAGPGRSLYLPFTLLLKQPGAYKVSLHRYVHSTQTKS). Residues 69 to 103 (FQKFTVKVLKEQCKSRGLKLSGRKSDLLQRLITHD) enclose the SAP domain. The chain crosses the membrane as a helical span at residues 172 to 187 (IFLLGFFMLSCLWWNL).

The protein belongs to the AIM34 family.

The protein resides in the mitochondrion membrane. In Saccharomyces cerevisiae (strain JAY291) (Baker's yeast), this protein is Altered inheritance of mitochondria protein 34, mitochondrial (AIM34).